Consider the following 162-residue polypeptide: D-beta-D-heptose 1-phosphate adenylyltransferase (162 aa).

It carries out the reaction D-glycero-beta-D-manno-heptose 1-phosphate + ATP + H(+) = ADP-D-glycero-beta-D-manno-heptose + diphosphate. The protein operates within nucleotide-sugar biosynthesis; ADP-L-glycero-beta-D-manno-heptose biosynthesis; ADP-L-glycero-beta-D-manno-heptose from D-glycero-beta-D-manno-heptose 7-phosphate: step 3/4. Its pathway is bacterial outer membrane biogenesis; LPS core biosynthesis. In terms of biological role, catalyzes the ADP transfer from ATP to D-glycero-beta-D-manno-heptose 1-phosphate, yielding ADP-D-glycero-beta-D-manno-heptose. Cannot use GTP, UTP, or CTP as substrate. Is not active against the alpha-anomer substrate. Is also able to catalyze the ADP transfer to beta-glucose 1-phosphate in vitro, yielding ADP-beta-glucose. The polypeptide is D-beta-D-heptose 1-phosphate adenylyltransferase (Bordetella bronchiseptica (strain ATCC BAA-588 / NCTC 13252 / RB50) (Alcaligenes bronchisepticus)).